Reading from the N-terminus, the 334-residue chain is Phosphoribosylformylglycinamidine cyclo-ligase (334 aa).

It belongs to the AIR synthase family.

The protein localises to the cytoplasm. It carries out the reaction 2-formamido-N(1)-(5-O-phospho-beta-D-ribosyl)acetamidine + ATP = 5-amino-1-(5-phospho-beta-D-ribosyl)imidazole + ADP + phosphate + H(+). The protein operates within purine metabolism; IMP biosynthesis via de novo pathway; 5-amino-1-(5-phospho-D-ribosyl)imidazole from N(2)-formyl-N(1)-(5-phospho-D-ribosyl)glycinamide: step 2/2. The chain is Phosphoribosylformylglycinamidine cyclo-ligase from Thermococcus gammatolerans (strain DSM 15229 / JCM 11827 / EJ3).